The sequence spans 151 residues: Prefoldin subunit alpha (151 aa).

It belongs to the prefoldin subunit alpha family. As to quaternary structure, heterohexamer of two alpha and four beta subunits.

The protein localises to the cytoplasm. Its function is as follows. Molecular chaperone capable of stabilizing a range of proteins. Seems to fulfill an ATP-independent, HSP70-like function in archaeal de novo protein folding. This Sulfurisphaera tokodaii (strain DSM 16993 / JCM 10545 / NBRC 100140 / 7) (Sulfolobus tokodaii) protein is Prefoldin subunit alpha.